Consider the following 155-residue polypeptide: 6,7-dimethyl-8-ribityllumazine synthase (155 aa).

Residues F23, 57-59, and 81-83 each bind 5-amino-6-(D-ribitylamino)uracil; these read AFE and AVI. Residue 86-87 participates in (2S)-2-hydroxy-3-oxobutyl phosphate binding; the sequence is AT. H89 functions as the Proton donor in the catalytic mechanism. 5-amino-6-(D-ribitylamino)uracil is bound at residue F114. A (2S)-2-hydroxy-3-oxobutyl phosphate-binding site is contributed by R128.

The protein belongs to the DMRL synthase family.

It carries out the reaction (2S)-2-hydroxy-3-oxobutyl phosphate + 5-amino-6-(D-ribitylamino)uracil = 6,7-dimethyl-8-(1-D-ribityl)lumazine + phosphate + 2 H2O + H(+). It functions in the pathway cofactor biosynthesis; riboflavin biosynthesis; riboflavin from 2-hydroxy-3-oxobutyl phosphate and 5-amino-6-(D-ribitylamino)uracil: step 1/2. Catalyzes the formation of 6,7-dimethyl-8-ribityllumazine by condensation of 5-amino-6-(D-ribitylamino)uracil with 3,4-dihydroxy-2-butanone 4-phosphate. This is the penultimate step in the biosynthesis of riboflavin. The protein is 6,7-dimethyl-8-ribityllumazine synthase of Pelotomaculum thermopropionicum (strain DSM 13744 / JCM 10971 / SI).